A 313-amino-acid polypeptide reads, in one-letter code: Olfactory receptor 8B3 (313 aa).

Residues Met1–Gln25 lie on the Extracellular side of the membrane. Asn5 carries an N-linked (GlcNAc...) asparagine glycan. A helical membrane pass occupies residues Pro26–Ile46. Topologically, residues Ile47 to His54 are cytoplasmic. A helical membrane pass occupies residues Leu55–Ser75. Over Val76–Thr99 the chain is Extracellular. A disulfide bridge connects residues Cys97 and Cys189. The helical transmembrane segment at Gln100–Tyr120 threads the bilayer. Residues Asp121–Gln139 are Cytoplasmic-facing. A helical transmembrane segment spans residues Val140–Thr160. Topologically, residues Gly161–Val197 are extracellular. The helical transmembrane segment at Val198–Ser217 threads the bilayer. The Cytoplasmic segment spans residues Tyr218–Ala237. The chain crosses the membrane as a helical span at residues Phe238–Met258. The Extracellular portion of the chain corresponds to Tyr259 to Gly270. The chain crosses the membrane as a helical span at residues Lys271–Leu291. The Cytoplasmic segment spans residues Arg292–Phe313.

The protein belongs to the G-protein coupled receptor 1 family.

It localises to the cell membrane. Odorant receptor. This chain is Olfactory receptor 8B3 (OR8B3), found in Homo sapiens (Human).